Here is a 572-residue protein sequence, read N- to C-terminus: NADP-dependent malic enzyme (572 aa).

Met1 is modified (N-acetylmethionine). Tyr102 functions as the Proton donor in the catalytic mechanism. Residue Arg155 coordinates NADP(+). Lys173 (proton acceptor) is an active-site residue. A divalent metal cation contacts are provided by Glu245, Asp246, and Asp269. NADP(+) contacts are provided by residues Asp269 and 301–318 (GAGEAALGIAHLIVMALE). Ser336 is modified (phosphoserine). An NADP(+)-binding site is contributed by Asn408.

This sequence belongs to the malic enzymes family. In terms of assembly, homotetramer. Requires Mg(2+) as cofactor. The cofactor is Mn(2+). As to expression, expressed in all tissues tested including liver, placenta and white adipose tissue.

The protein localises to the cytoplasm. It carries out the reaction (S)-malate + NADP(+) = pyruvate + CO2 + NADPH. The enzyme catalyses oxaloacetate + H(+) = pyruvate + CO2. Functionally, catalyzes the oxidative decarboxylation of (S)-malate in the presence of NADP(+) and divalent metal ions, and decarboxylation of oxaloacetate. The protein is NADP-dependent malic enzyme of Homo sapiens (Human).